A 161-amino-acid polypeptide reads, in one-letter code: Allophycocyanin alpha-B chain (161 aa).

Asn71 carries the post-translational modification N4-methylasparagine. Cys81 serves as a coordination point for (2R,3E)-phycocyanobilin.

The protein belongs to the phycobiliprotein family. In terms of processing, contains one covalently linked bilin chromophore.

Its subcellular location is the plastid. The protein resides in the chloroplast thylakoid membrane. Functionally, allophycocyanin is a photosynthetic bile pigment-protein complex with maximum absorption at approximately 650 nanometers. The chain is Allophycocyanin alpha-B chain (apcD) from Porphyra purpurea (Red seaweed).